Reading from the N-terminus, the 450-residue chain is MGKLFGTDGVRGVANLELTPELAFQLGRAGSYVLARHEASKRPRILVGKDTRISGDMLEAALIAGICSTGADVLTVGILPTPAVAFLTQRYQASCGVVISASHNPLEDNGIKFFGPSGYKLPDELEEEIEELVLAGTQELQRPQGEDVGRVYLVAEARNNYLDYLISCYSQDQNLAGITVVVDCANGAAYSTGPELWSRLGAQVIAINNYPNGVNINERCGSTYTEGLRRAVVEHKADMGIAYDGDADRCIVVDERGNELDGDHIIMICALDMNSRGELNPPLVAATVMSNIGLDIALRRENIQVASCKVGDRYVLEKMKESGALLGGEQSGHIIFLEHATTGDGLLTSLKVAEVLRRSGLTLSELARGLEKQPQLLVNLRMENKDKILAHPLVQEALKQAEERLGEWGKLVVRPSGTEPVVRIMAQGPEQYLLEEVIAEIKQSIERAQA.

Ser102 serves as the catalytic Phosphoserine intermediate. Ser102, Asp244, Asp246, and Asp248 together coordinate Mg(2+). Residue Ser102 is modified to Phosphoserine.

Belongs to the phosphohexose mutase family. It depends on Mg(2+) as a cofactor. Post-translationally, activated by phosphorylation.

The enzyme catalyses alpha-D-glucosamine 1-phosphate = D-glucosamine 6-phosphate. Its function is as follows. Catalyzes the conversion of glucosamine-6-phosphate to glucosamine-1-phosphate. The sequence is that of Phosphoglucosamine mutase from Syntrophomonas wolfei subsp. wolfei (strain DSM 2245B / Goettingen).